A 359-amino-acid chain; its full sequence is MEKIFQNVDIKPLLIDFSNPFIKNAAKKLFQLEEQLPLVPVNVMMDFKGINRATVHGLSRVLQDEIPNYMLDIKPGGYKIEDSTDLFMTEQFVRNRINFIPIYAENETLVFALRSLNNSCEVKTIYSRDLIQVAGPKLKYPIFNPTFEIGFLQPGKSLIIEDIYIKKGIGRKHAAFNLAVKTHFSHLDIEQYPTDKKEYMALSGYKQSSMTSDPRHHRLGLCFPAVPLPRINQVVRTYLKNACRVIIGRIQNIQKIYENFEEPQPELVLFSMDEEKTKAIITIKDETHTIGNLLKTCIYEMIPDISFVGYQCIPHKQEMVLTIIHKASQEDLITLLEKSIQNIIQIFQTLEKNIDERIA.

This sequence in the N-terminal section; belongs to the archaeal RpoD/eukaryotic RPB3 RNA polymerase subunit family. It in the C-terminal section; belongs to the archaeal RpoL/eukaryotic RPB11/RPC19 RNA polymerase subunit family. Part of the viral DNA-directed RNA polymerase that consists of 8 polII-like subunits (RPB1, RPB2, RPB3, RPB5, RPB6, RPB7, RPB9, RPB10), a capping enzyme and a termination factor.

The protein localises to the host cytoplasm. The protein resides in the virion. Functionally, component of the DNA-directed RNA polymerase (RNAP) that catalyzes the transcription in the cytoplasm of viral DNA into RNA using the four ribonucleoside triphosphates as substrates. In Ornithodoros (relapsing fever ticks), this protein is DNA-directed RNA polymerase RPB3-11 homolog.